Here is a 277-residue protein sequence, read N- to C-terminus: Shikimate dehydrogenase (NADP(+)) (277 aa).

Residues 15–17 (SLS) and threonine 62 contribute to the shikimate site. Lysine 66 (proton acceptor) is an active-site residue. Shikimate contacts are provided by asparagine 87 and aspartate 102. NADP(+) contacts are provided by residues 127 to 131 (GAGGA), 151 to 156 (NRTVDK), and isoleucine 219. Tyrosine 221 provides a ligand contact to shikimate. Glycine 242 contacts NADP(+).

It belongs to the shikimate dehydrogenase family. In terms of assembly, homodimer.

It carries out the reaction shikimate + NADP(+) = 3-dehydroshikimate + NADPH + H(+). The protein operates within metabolic intermediate biosynthesis; chorismate biosynthesis; chorismate from D-erythrose 4-phosphate and phosphoenolpyruvate: step 4/7. Its function is as follows. Involved in the biosynthesis of the chorismate, which leads to the biosynthesis of aromatic amino acids. Catalyzes the reversible NADPH linked reduction of 3-dehydroshikimate (DHSA) to yield shikimate (SA). This Bacillus anthracis (strain CDC 684 / NRRL 3495) protein is Shikimate dehydrogenase (NADP(+)).